Here is a 6684-residue protein sequence, read N- to C-terminus: Replicase polyprotein 1ab (6684 aa).

A CoV Nsp1 globular domain is found at 2–108; that stretch reads SSKQFKILVN…DFDLKIARTG (107 aa). The 239-residue stretch at 111–349 folds into the CoV Nsp2 N-terminal domain; the sequence is AIYVDQYMCG…KSLVACSVKR (239 aa). C240, C242, C259, and C260 together coordinate Zn(2+). Residues 240–260 are C4; the sequence is CPCGSESSGVGDWTGFKTACC. One can recognise a CoV Nsp2 middle domain in the interval 378-773; that stretch reads NVGLLFKKTP…CNAARNDIEI (396 aa). In terms of domain architecture, CoV Nsp2 C-terminal spans 768-879; the sequence is RNDIEIGGIP…VQRMYNKMGG (112 aa). Positions 882-983 constitute a Ubiquitin-like 1 domain; that stretch reads KTVSFSEEVD…DGIMISQYDI (102 aa). Positions 989 to 1032 are disordered; the sequence is EKSEVSASSEEEEVESVEEDPENEIVEASEGAEGTSSQEEVETV. Positions 997-1015 are enriched in acidic residues; it reads SEEEEVESVEEDPENEIVE. In terms of domain architecture, Peptidase C16 1 spans 1055–1299; that stretch reads PWAAAVDVQE…FKVEKVEQQP (245 aa). C1093 acts as the For PL1-PRO activity in catalysis. A C4-type 1; degenerate zinc finger spans residues 1164–1195; that stretch reads CGCGEKEIVLERAVFKLTPLKESFNYGVCGDC. Active-site for PL1-PRO activity residues include H1244 and D1257. One can recognise a Macro domain in the interval 1318–1489; it reads NDDLILPFYK…TIENFFSCSI (172 aa). The Ubiquitin-like 2 domain occupies 1486 to 1542; the sequence is SCSIPVNVTEDNVNHERVSVSFDKTYGEQLKGTVVIKDKDVTNQLPSAFDVGQKVIK. Residues 1550 to 1803 enclose the Peptidase C16 2 domain; the sequence is AHYGFRDAAA…KVAASPKIVQ (254 aa). C1588 (for PL2-PRO activity) is an active-site residue. Zn(2+) contacts are provided by C1667, C1670, C1694, and H1696. A C4-type 2; atypical zinc finger spans residues 1667-1696; sequence CDKCAKVEKFVGPVVAAPLAIHGTDETCVH. Catalysis depends on for PL2-PRO activity residues H1741 and D1754. The chain crosses the membrane as a helical span at residues 1896 to 1916; sequence LVLLLIAIYNFFYLFVSIPVV. Residues 1896–2053 are HD1; it reads LVLLLIAIYN…LALKHIVFAC (158 aa). A 3Ecto domain is found at 1905–1970; the sequence is NFFYLFVSIP…LQVTWDFKSD (66 aa). 2 disulfide bridges follow: C1921–C1948 and C1939–C1945. 2 helical membrane passes run 1995-2015 and 2033-2053; these read CFLM…FGYV and FVIV…VFAC. The interval 2044 to 2134 is Y1; it reads LALKHIVFAC…SVKQTVYATD (91 aa). Residues 2044–2384 enclose the CoV Nsp3 Y domain; that stretch reads LALKHIVFAC…PYERFTESVS (341 aa). H2048, C2053, C2058, C2061, C2094, H2097, C2101, and C2104 together coordinate Zn(2+). The interval 2048–2061 is ZF1; that stretch reads HIVFACSNPSCKTC. Positions 2094–2104 are ZF2; sequence CKKHNFYCKNC. Positions 2135–2224 are Y2; the sequence is RSHQEVTKVE…IVNSDLLEDL (90 aa). Residues 2135-2384 form a coV-Y region; that stretch reads RSHQEVTKVE…PYERFTESVS (250 aa). The interval 2225–2281 is Y3; it reads SVDFKGALFNAKKNVIKNSFNVDVSECKNLDECYRACNLNVSFSTFEMAVNNAHRFG. The Y4 stretch occupies residues 2282-2384; sequence ILITDRSFNN…PYERFTESVS (103 aa). The next 8 membrane-spanning stretches (helical) occupy residues 2401–2421, 2467–2487, 2497–2517, 2538–2558, 2666–2686, 2695–2715, 2721–2741, and 2746–2766; these read IVIL…YSVA, YGFI…VFDL, PAYV…AFGV, CVFN…VYCA, GAML…YGVL, CTFL…SYFV, FMII…YPGI, and FIIA…ILVF. An HD2 region spans residues 2401–2766; that stretch reads IVILVFVFIF…YVITAYILVF (366 aa). The region spanning 2783–2878 is the Nsp4C domain; the sequence is LFEGDKFVGN…PTVSVNSTLQ (96 aa). One can recognise a Peptidase C30 domain in the interval 2879-3180; that stretch reads SGLRKMAQPS…IRQMYGVNLQ (302 aa). Residues H2919 and C3022 each act as for 3CL-PRO activity in the active site. A run of 8 helical transmembrane segments spans residues 3187–3207, 3217–3237, 3242–3262, 3280–3300, 3313–3333, 3347–3367, 3371–3391, and 3394–3414; these read FFYP…EFFM, TFVS…VSGI, LFFM…NLFW, MFLP…IVFV, WFSL…IFGT, FVNM…VVIA, IAYY…FGFM, and ISIV…ILYW. An HD3 region spans residues 3187-3414; that stretch reads FFYPIMTAMT…FCCYYGILYW (228 aa). Positions 3475-3557 constitute a RdRp Nsp7 cofactor domain; sequence SKLTEMKCTN…SYFENTTILQ (83 aa). The RdRp Nsp8 cofactor domain occupies 3558–3752; sequence SVASAYAALP…ITCERTTKLQ (195 aa). Residues 3753–3863 enclose the Nsp9 ssRNA-binding domain; that stretch reads NNEIMPGKLK…GYIGATVRLQ (111 aa). The 141-residue stretch at 3864–4004 folds into the ExoN/MTase coactivator domain; that stretch reads AGKPTEHPSN…TSMQSFTVDQ (141 aa). Residues C3937, C3940, H3946, C3953, C3979, C3982, C3990, and C3992 each contribute to the Zn(2+) site. Zinc fingers lie at residues 3937–3953 and 3979–3992; these read CIYC…DGLC and CVVC…GCMC. The NiRAN domain occupies 4006–4255; that stretch reads YLNRVRGSSA…ESENFVKSDI (250 aa). Residues 4261-4359 enclose the Nsp12 Interface domain; that stretch reads KQYDLLAYDF…WNLDVKLDTM (99 aa). Residues H4290, C4296, C4301, C4305, and C4482 each coordinate Zn(2+). In terms of domain architecture, Nsp12 RNA-dependent RNA polymerase spans 4360–4927; sequence KLSMTDLLRF…SLYEKSTVLQ (568 aa). A rdRp Fingers N-ter region spans residues 4362–4576; the sequence is SMTDLLRFVT…HQKHLKSIAA (215 aa). The interval 4577–4615 is rdRp Palm N-ter; that stretch reads TRNATVVIGSTKFYGGWDNMLKNLMRDVDNGCLMGWDYP. One can recognise a RdRp catalytic domain in the interval 4607-4769; the sequence is GCLMGWDYPK…CYNKDYADLG (163 aa). The interval 4616-4674 is rdRp Fingers C-ter; sequence KCDRALPNMIRMASAMILGSKHVGCCTHNDRFYRLSNELAQVLTEVVHCTGGFYFKPGG. Residues H4637, C4640, and C4641 each contribute to the Zn(2+) site. The segment at 4675–4810 is rdRp Palm C-ter; it reads TTSGDGTTAY…SVGPHEFCSQ (136 aa). Residues S4754, D4755, and D4756 contribute to the active site. A rdRp Thumb region spans residues 4811-4927; that stretch reads HTLQIVGPDG…SLYEKSTVLQ (117 aa). The 113-residue stretch at 4928–5040 folds into the CV ZBD domain; it reads AAGMCVVCGS…EDFNKLAVSD (113 aa). Residues C4932, C4935, C4943, C4946, C4953, C4956, H4960, H4966, C4977, C4982, C4999, and H5002 each contribute to the Zn(2+) site. The region spanning 5175–5366 is the (+)RNA virus helicase ATP-binding domain; it reads NTISKLYPVF…MCTLGPDVFL (192 aa). An ATP-binding site is contributed by 5210 to 5217; the sequence is GPPGSGKS. Residues 5367–5536 form the (+)RNA virus helicase C-terminal domain; that stretch reads HKCYRCPAEI…AKPETCGLFK (170 aa). Positions 5598–5812 constitute an ExoN domain; it reads LFCTRDFAMR…RCLAIHDCFV (215 aa). Catalysis depends on residues D5616, E5618, and E5717. Positions 5733, 5735, 5751, 5754, 5782, 5786, and 5789 each coordinate Zn(2+). Residues H5793 and D5798 contribute to the active site. C5804 serves as a coordination point for Zn(2+). The region spanning 5821 to 6042 is the N7-MTase domain; the sequence is YPFIDNEEKI…MLWHGFVNSK (222 aa). 5856–5862 is a binding site for S-adenosyl-L-methionine; the sequence is DVGNPKG. A gpppA-binding region spans residues 5933 to 5947; it reads CNGGALYVNNHAFHT. The Zn(2+) site is built by C5971, C5988, C5999, and H6002. The Nsp15 N-terminal oligomerization domain occupies 6046–6106; the sequence is SLENVAFNVV…NVAFELYAKR (61 aa). One can recognise an AV-Nsp11N/CoV-Nsp15M domain in the interval 6107 to 6224; it reads KLGLTPPLTI…IYVRKNGEYV (118 aa). In terms of domain architecture, NendoU spans 6241-6381; sequence KPRSTMEEDF…ENSHIKTFYP (141 aa). Residues H6271, H6286, K6327, K6429, D6513, K6553, and E6586 contribute to the active site. Residues 6385 to 6681 form the Nidovirus-type SAM-dependent 2'-O-MTase domain; the sequence is SAEWNPGYSM…KLLNFGNHFV (297 aa).

Belongs to the coronaviruses polyprotein 1ab family. In terms of assembly, 3CL-PRO exists as monomer and homodimer. Eight copies of nsp7 and eight copies of nsp8 assemble to form a heterohexadecamer. Nsp9 is a dimer. Nsp10 forms a dodecamer. The cofactor is Mn(2+). Post-translationally, specific enzymatic cleavages in vivo by its own proteases yield mature proteins. 3CL-PRO is autocatalytically processed.

The protein localises to the host membrane. It localises to the host cytoplasm. It is found in the host perinuclear region. The protein resides in the host endoplasmic reticulum-Golgi intermediate compartment. The enzyme catalyses Thiol-dependent hydrolysis of ester, thioester, amide, peptide and isopeptide bonds formed by the C-terminal Gly of ubiquitin (a 76-residue protein attached to proteins as an intracellular targeting signal).. The catalysed reaction is RNA(n) + a ribonucleoside 5'-triphosphate = RNA(n+1) + diphosphate. It carries out the reaction ATP + H2O = ADP + phosphate + H(+). It catalyses the reaction a 5'-end diphospho-ribonucleoside in mRNA + GTP + H(+) = a 5'-end (5'-triphosphoguanosine)-ribonucleoside in mRNA + diphosphate. The enzyme catalyses a 5'-end (N(7)-methyl 5'-triphosphoguanosine)-ribonucleoside in mRNA + S-adenosyl-L-methionine = a 5'-end (N(7)-methyl 5'-triphosphoguanosine)-(2'-O-methyl-ribonucleoside) in mRNA + S-adenosyl-L-homocysteine + H(+). The catalysed reaction is uridylyl-uridylyl-ribonucleotide-RNA = a 3'-end uridylyl-2',3'-cyclophospho-uridine-RNA + a 5'-end dephospho-ribonucleoside-RNA. Functionally, the replicase polyprotein of coronaviruses is a multifunctional protein: it contains the activities necessary for the transcription of negative stranded RNA, leader RNA, subgenomic mRNAs and progeny virion RNA as well as proteinases responsible for the cleavage of the polyprotein into functional products. Non-structural protein 1 inhibits host translation. By suppressing host gene expression, nsp1 facilitates efficient viral gene expression in infected cells and evasion from host immune response. In terms of biological role, the papain-like proteinase 1 (PLP1) and papain-like proteinase 2 (PLP2) are responsible for the cleavages located at the N-terminus of the replicase polyprotein. In addition, PLP2 possesses a deubiquitinating/deISGylating activity and processes both 'Lys-48'- and 'Lys-63'-linked polyubiquitin chains from cellular substrates. PLP2 also antagonizes innate immune induction of type I interferon by blocking the nuclear translocation of host IRF-3. Its function is as follows. Responsible for the majority of cleavages as it cleaves the C-terminus of replicase polyprotein at 11 sites. Recognizes substrates containing the core sequence [ILMVF]-Q-|-[SAGC]. Inhibited by the substrate-analog Cbz-Val-Asn-Ser-Thr-Leu-Gln-CMK. Functionally, the helicase which contains a zinc finger structure displays RNA and DNA duplex-unwinding activities with 5' to 3' polarity. ATPase activity is strongly stimulated by poly(U), poly(dT), poly(C), poly(dA), but not by poly(G). The exoribonuclease acts on both ssRNA and dsRNA in a 3' to 5' direction. In terms of biological role, nsp7-nsp8 hexadecamer may possibly confer processivity to the polymerase, maybe by binding to dsRNA or by producing primers utilized by the latter. Its function is as follows. Forms a primer, NSP9-pU, which is utilized by the polymerase for the initiation of RNA chains. Interacts with ribosome signal recognition particle RNA (SRP). Together with NSP8, suppress protein integration into the cell membrane, thereby disrupting host immune defenses. Functionally, RNA-directed RNA polymerase that catalyzes the transcription of viral genomic and subgenomic RNAs. Acts in complex with nsp7 and nsp8 to transcribe both the minus and positive strands of genomic RNA. The kinase-like NiRAN domain of NSP12 attaches one or more nucleotides to the amino terminus of NSP9, forming a covalent RNA-protein intermediate that serves as transcription/replication primer. Subgenomic RNAs (sgRNAs) are formed by discontinuous transcription: The polymerase has the ability to pause at transcription-regulating sequences (TRS) and jump to the leader TRS, resulting in a major deletion. This creates a series of subgenomic RNAs that are replicated, transcribed and translated. In addition, Nsp12 is a subunit of the viral RNA capping enzyme that catalyzes the RNA guanylyltransferase reaction for genomic and sub-genomic RNAs. Subsequently, the NiRAN domain transfers RNA to GDP, and forms the core cap structure GpppA-RNA. Plays a role in viral transcription/replication and prevents the simultaneous activation of host cell dsRNA sensors, such as MDA5/IFIH1, OAS, and PKR. Acts by degrading the 5'-polyuridines generated during replication of the poly(A) region of viral genomic and subgenomic RNAs. Catalyzes a two-step reaction in which a 2'3'-cyclic phosphate (2'3'-cP) is first generated by 2'-O transesterification, which is then hydrolyzed to a 3'-phosphate (3'-P). If not degraded, poly(U) RNA would hybridize with poly(A) RNA tails and activate host dsRNA sensors. This is Replicase polyprotein 1ab (rep) from Sus scrofa (Pig).